Here is a 335-residue protein sequence, read N- to C-terminus: MVTLHGUACKLPDTELENLVKGIISEDDLKHAKVGLGDDAAVVIKNGMAIVKTIDVFTPIVDDPYLQGRIAACNSTSDVYAMGISEIIGGLVFLGIPPELPVPVAKKMLQGFQDFCRENDTTIIGGHTILNPWPLIGGSITGVGKEEDILTKAGCKNGDVLILTKPLGNQSAMALSRVTEEFEDLIDIPKEEQKYIFEKTIELMTTSNRIALLHLRELENELGEKIANAMTDVTGFGILGHSQEMAEQSDVEIEISCLPVIKGTPELASLFGHALCSGKGAETAGGLLISTKPEYKDKLIQKFKENNVYAFEVGKIVNNGVGIAKLSENVEILEI.

Selenocysteine 7 is an active-site residue. A non-standard amino acid (selenocysteine) is located at residue selenocysteine 7. ATP contacts are provided by residues lysine 10 and leucine 36–aspartate 38. A Mg(2+)-binding site is contributed by aspartate 39. Residues aspartate 55, aspartate 78, and glycine 126 to threonine 128 contribute to the ATP site. Aspartate 78 serves as a coordination point for Mg(2+). Mg(2+) is bound at residue aspartate 232.

The protein belongs to the selenophosphate synthase 1 family. Class I subfamily. Homodimer. It depends on Mg(2+) as a cofactor.

It carries out the reaction hydrogenselenide + ATP + H2O = selenophosphate + AMP + phosphate + 2 H(+). Its function is as follows. Synthesizes selenophosphate from selenide and ATP. The polypeptide is Selenide, water dikinase (Methanococcus maripaludis (strain DSM 14266 / JCM 13030 / NBRC 101832 / S2 / LL)).